Reading from the N-terminus, the 206-residue chain is Amelogenin, Y isoform (206 aa).

The N-terminal stretch at 1 to 16 (MGTWILFACLVGAAFA) is a signal peptide. Residues 118–180 (VPGQQSMTPT…PPLPPMFPLR (63 aa)) form a disordered region. Over residues 128–142 (QHHQPNLPLPAQQPF) the composition is skewed to low complexity. Residues 143 to 180 (QPQPVQPQPHQPMQPQPPVQPMQPLLPQPPLPPMFPLR) are compositionally biased toward pro residues.

This sequence belongs to the amelogenin family.

The protein resides in the secreted. Its subcellular location is the extracellular space. It is found in the extracellular matrix. Functionally, plays a role in biomineralization. Seems to regulate the formation of crystallites during the secretory stage of tooth enamel development. Thought to play a major role in the structural organization and mineralization of developing enamel. The protein is Amelogenin, Y isoform (AMELY) of Homo sapiens (Human).